Consider the following 517-residue polypeptide: L-amino-acid oxidase (517 aa).

Positions 1–19 are cleaved as a signal peptide; sequence MNVFSIFSLVFLAAFGSCA. Cysteines 29 and 192 form a disulfide. FAD contacts are provided by residues 62 to 63, 82 to 83, Arg90, and 106 to 109; these read MA, EA, and GPMR. Residue Arg109 participates in substrate binding. Asn191 carries N-linked (GlcNAc...) asparagine glycosylation. Val280 provides a ligand contact to FAD. An intrachain disulfide couples Cys350 to Cys431. Asn380 is a glycosylation site (N-linked (GlcNAc...) asparagine). Residue Tyr391 coordinates substrate. FAD contacts are provided by residues Glu476 and 483 to 488; that span reads GWLDST. 483–484 provides a ligand contact to substrate; sequence GW.

This sequence belongs to the flavin monoamine oxidase family. FIG1 subfamily. As to quaternary structure, monomer. This is in contrast with most of its orthologs, that are non-covalently linked homodimers. FAD is required as a cofactor. N-glycosylated. Expressed by the venom gland.

Its subcellular location is the secreted. The catalysed reaction is an L-alpha-amino acid + O2 + H2O = a 2-oxocarboxylate + H2O2 + NH4(+). The enzyme catalyses L-leucine + O2 + H2O = 4-methyl-2-oxopentanoate + H2O2 + NH4(+). It carries out the reaction L-phenylalanine + O2 + H2O = 3-phenylpyruvate + H2O2 + NH4(+). It catalyses the reaction L-tryptophan + O2 + H2O = indole-3-pyruvate + H2O2 + NH4(+). The catalysed reaction is L-methionine + O2 + H2O = 4-methylsulfanyl-2-oxobutanoate + H2O2 + NH4(+). The enzyme catalyses L-isoleucine + O2 + H2O = (S)-3-methyl-2-oxopentanoate + H2O2 + NH4(+). It carries out the reaction L-arginine + O2 + H2O = 5-guanidino-2-oxopentanoate + H2O2 + NH4(+). It catalyses the reaction L-aspartate + O2 + H2O = oxaloacetate + H2O2 + NH4(+). The catalysed reaction is L-histidine + O2 + H2O = 3-(imidazol-5-yl)pyruvate + H2O2 + NH4(+). The enzyme catalyses L-asparagine + O2 + H2O = 2-oxosuccinamate + H2O2 + NH4(+). It carries out the reaction L-tyrosine + O2 + H2O = 3-(4-hydroxyphenyl)pyruvate + H2O2 + NH4(+). It catalyses the reaction L-glutamine + O2 + H2O = 2-oxoglutaramate + H2O2 + NH4(+). The catalysed reaction is L-alanine + O2 + H2O = pyruvate + H2O2 + NH4(+). The enzyme catalyses L-lysine + O2 + H2O = 6-amino-2-oxohexanoate + H2O2 + NH4(+). It carries out the reaction L-glutamate + O2 + H2O = H2O2 + 2-oxoglutarate + NH4(+). Catalyzes an oxidative deamination of predominantly hydrophobic and aromatic L-amino acids, thus producing hydrogen peroxide that may contribute to the diverse toxic effects of this enzyme. Is highly active against L-Tyr, L-Asp, L-Phe, L-Glu, L-Trp, L-His, L-Gln, L-Ile, L-Met, L-Leu and moderately active against L-Lys, L-Arg, L-Ala and L-Asn. Exhibits diverse biological activities, such as edema, inflammatory cell infiltration, cytotoxicity and apoptosis, as well as induction of platelet aggregation. Effects of snake L-amino oxidases on platelets are controversial, since they either induce aggregation or inhibit agonist-induced aggregation. These different effects are probably due to different experimental conditions. This protein may also induce hemorrhage, hemolysis, and have antibacterial and antiparasitic activities. This chain is L-amino-acid oxidase, found in Bungarus fasciatus (Banded krait).